The primary structure comprises 61 residues: Defensin BmKDfsin1 (61 aa).

The signal sequence occupies residues 1–25 (MKTIVLLFVLVLVFALLVKMGMVEA). Intrachain disulfides connect cysteine 29–cysteine 50, cysteine 36–cysteine 58, and cysteine 40–cysteine 60.

This sequence belongs to the invertebrate defensin family. Type 2 subfamily. As to expression, highly expressed in non-venom gland (hemolymph) and moderately expressed in venom gland.

The protein resides in the secreted. Its function is as follows. Antibacterial peptide active against Gram-positive bacteria, but not on Gram-negative bacteria. Also has weak blocking activity on Kv1.1/KCNA1, Kv1.2/KCNA2, Kv1.3/KCNA3, KCa3.1/KCNN4/IK, KCa2.3/KCNN3/SK3 and Kv11.1/KCNH2/ERG1 channels (tested at 1 uM). It inhibits potassium channel current by interacting with the pore region. The protein is Defensin BmKDfsin1 of Olivierus martensii (Manchurian scorpion).